We begin with the raw amino-acid sequence, 457 residues long: Ribulose bisphosphate carboxylase large chain (457 aa).

Positions 1 to 2 are excised as a propeptide; that stretch reads MS. The residue at position 3 (proline 3) is an N-acetylproline. Lysine 14 carries the post-translational modification N6,N6,N6-trimethyllysine. Substrate is bound by residues asparagine 123 and threonine 173. Lysine 175 functions as the Proton acceptor in the catalytic mechanism. Lysine 177 serves as a coordination point for substrate. Lysine 201, aspartate 203, and glutamate 204 together coordinate Mg(2+). Residue lysine 201 is modified to N6-carboxylysine. The Proton acceptor role is filled by histidine 294. Arginine 295, histidine 327, and serine 379 together coordinate substrate.

Belongs to the RuBisCO large chain family. Type I subfamily. Heterohexadecamer of 8 large chains and 8 small chains; disulfide-linked. The disulfide link is formed within the large subunit homodimers. Mg(2+) is required as a cofactor. In terms of processing, the disulfide bond which can form in the large chain dimeric partners within the hexadecamer appears to be associated with oxidative stress and protein turnover.

The protein localises to the plastid. Its subcellular location is the chloroplast. The enzyme catalyses 2 (2R)-3-phosphoglycerate + 2 H(+) = D-ribulose 1,5-bisphosphate + CO2 + H2O. The catalysed reaction is D-ribulose 1,5-bisphosphate + O2 = 2-phosphoglycolate + (2R)-3-phosphoglycerate + 2 H(+). Functionally, ruBisCO catalyzes two reactions: the carboxylation of D-ribulose 1,5-bisphosphate, the primary event in carbon dioxide fixation, as well as the oxidative fragmentation of the pentose substrate in the photorespiration process. Both reactions occur simultaneously and in competition at the same active site. The protein is Ribulose bisphosphate carboxylase large chain of Phelline comosa.